A 157-amino-acid chain; its full sequence is MEKFPMTPGGFEKLKEELRWRQQSERPRIIEAIAEARAHGDLSENAEYHAAKEAQSLNEGRINELEDLVARAEIIDVSKLSGDRIKFGATVTMIDEDTDEEKVYQIVGDQEADVKEGRISISSPIARALIGKGEGDTIEVNAPGGSRSYEIVGLKFV.

This sequence belongs to the GreA/GreB family.

Necessary for efficient RNA polymerase transcription elongation past template-encoded arresting sites. The arresting sites in DNA have the property of trapping a certain fraction of elongating RNA polymerases that pass through, resulting in locked ternary complexes. Cleavage of the nascent transcript by cleavage factors such as GreA or GreB allows the resumption of elongation from the new 3'terminus. GreA releases sequences of 2 to 3 nucleotides. In Brucella anthropi (strain ATCC 49188 / DSM 6882 / CCUG 24695 / JCM 21032 / LMG 3331 / NBRC 15819 / NCTC 12168 / Alc 37) (Ochrobactrum anthropi), this protein is Transcription elongation factor GreA.